A 349-amino-acid polypeptide reads, in one-letter code: 4-hydroxythreonine-4-phosphate dehydrogenase (349 aa).

Substrate-binding residues include H141 and T142. A divalent metal cation is bound by residues H176, H221, and H276. 3 residues coordinate substrate: K284, N293, and R302.

The protein belongs to the PdxA family. As to quaternary structure, homodimer. It depends on Zn(2+) as a cofactor. Mg(2+) serves as cofactor. Requires Co(2+) as cofactor.

The protein resides in the cytoplasm. It catalyses the reaction 4-(phosphooxy)-L-threonine + NAD(+) = 3-amino-2-oxopropyl phosphate + CO2 + NADH. It functions in the pathway cofactor biosynthesis; pyridoxine 5'-phosphate biosynthesis; pyridoxine 5'-phosphate from D-erythrose 4-phosphate: step 4/5. Functionally, catalyzes the NAD(P)-dependent oxidation of 4-(phosphooxy)-L-threonine (HTP) into 2-amino-3-oxo-4-(phosphooxy)butyric acid which spontaneously decarboxylates to form 3-amino-2-oxopropyl phosphate (AHAP). This is 4-hydroxythreonine-4-phosphate dehydrogenase from Methylorubrum populi (strain ATCC BAA-705 / NCIMB 13946 / BJ001) (Methylobacterium populi).